The primary structure comprises 136 residues: Photosystem II extrinsic protein U (136 aa).

The N-terminal stretch at 1 to 28 is a signal peptide; that stretch reads MKQLAQRLFSLALVLALVLGISVQSAQA.

This sequence belongs to the PsbU family. In terms of assembly, PSII is composed of 1 copy each of membrane proteins PsbA, PsbB, PsbC, PsbD, PsbE, PsbF, PsbH, PsbI, PsbJ, PsbK, PsbL, PsbM, PsbT, PsbX, PsbY, PsbZ, Psb30/Ycf12, peripheral proteins PsbO, CyanoQ (PsbQ), PsbU, PsbV and a large number of cofactors. It forms dimeric complexes.

The protein resides in the cellular thylakoid membrane. One of the extrinsic, lumenal subunits of photosystem II (PSII). PSII is a light-driven water plastoquinone oxidoreductase, using light energy to abstract electrons from H(2)O, generating a proton gradient subsequently used for ATP formation. The extrinsic proteins stabilize the structure of photosystem II oxygen-evolving complex (OEC), the ion environment of oxygen evolution and protect the OEC against heat-induced inactivation. The chain is Photosystem II extrinsic protein U from Synechococcus elongatus (strain ATCC 33912 / PCC 7942 / FACHB-805) (Anacystis nidulans R2).